Consider the following 183-residue polypeptide: Putative 3-methyladenine DNA glycosylase (183 aa).

This sequence belongs to the DNA glycosylase MPG family.

This chain is Putative 3-methyladenine DNA glycosylase, found in Rickettsia peacockii (strain Rustic).